The chain runs to 255 residues: Aliphatic sulfonates import ATP-binding protein SsuB (255 aa).

The ABC transporter domain maps to 12–233 (LLLNAVSKHY…RLGSVRLAEL (222 aa)). An ATP-binding site is contributed by 44-51 (GRSGGGKS).

The protein belongs to the ABC transporter superfamily. Aliphatic sulfonates importer (TC 3.A.1.17.2) family. As to quaternary structure, the complex is composed of two ATP-binding proteins (SsuB), two transmembrane proteins (SsuC) and a solute-binding protein (SsuA).

The protein resides in the cell inner membrane. The catalysed reaction is ATP + H2O + aliphatic sulfonate-[sulfonate-binding protein]Side 1 = ADP + phosphate + aliphatic sulfonateSide 2 + [sulfonate-binding protein]Side 1.. Functionally, part of the ABC transporter complex SsuABC involved in aliphatic sulfonates import. Responsible for energy coupling to the transport system. This chain is Aliphatic sulfonates import ATP-binding protein SsuB, found in Escherichia coli (strain K12).